We begin with the raw amino-acid sequence, 486 residues long: Probable glycine dehydrogenase (decarboxylating) subunit 2 (486 aa).

Lysine 269 carries the N6-(pyridoxal phosphate)lysine modification.

Belongs to the GcvP family. C-terminal subunit subfamily. The glycine cleavage system is composed of four proteins: P, T, L and H. In this organism, the P 'protein' is a heterodimer of two subunits. It depends on pyridoxal 5'-phosphate as a cofactor.

It catalyses the reaction N(6)-[(R)-lipoyl]-L-lysyl-[glycine-cleavage complex H protein] + glycine + H(+) = N(6)-[(R)-S(8)-aminomethyldihydrolipoyl]-L-lysyl-[glycine-cleavage complex H protein] + CO2. In terms of biological role, the glycine cleavage system catalyzes the degradation of glycine. The P protein binds the alpha-amino group of glycine through its pyridoxal phosphate cofactor; CO(2) is released and the remaining methylamine moiety is then transferred to the lipoamide cofactor of the H protein. The polypeptide is Probable glycine dehydrogenase (decarboxylating) subunit 2 (Chlorobium phaeobacteroides (strain DSM 266 / SMG 266 / 2430)).